The following is a 348-amino-acid chain: Dihydroorotase (348 aa).

His-14 and His-16 together coordinate Zn(2+). Substrate contacts are provided by residues 16–18 (HLR) and Asn-42. Residues Lys-100, His-137, and His-175 each coordinate Zn(2+). Lys-100 carries the post-translational modification N6-carboxylysine. Residue His-137 coordinates substrate. Leu-220 is a binding site for substrate. Asp-248 is a binding site for Zn(2+). Residue Asp-248 is part of the active site. Substrate-binding residues include His-252 and Ala-264.

Belongs to the metallo-dependent hydrolases superfamily. DHOase family. Class II DHOase subfamily. As to quaternary structure, homodimer. Zn(2+) is required as a cofactor.

The enzyme catalyses (S)-dihydroorotate + H2O = N-carbamoyl-L-aspartate + H(+). It functions in the pathway pyrimidine metabolism; UMP biosynthesis via de novo pathway; (S)-dihydroorotate from bicarbonate: step 3/3. Its function is as follows. Catalyzes the reversible cyclization of carbamoyl aspartate to dihydroorotate. The sequence is that of Dihydroorotase from Ectopseudomonas mendocina (strain ymp) (Pseudomonas mendocina).